A 104-amino-acid polypeptide reads, in one-letter code: PTS system lactose-specific EIIA component (104 aa).

The region spanning Glu-4 to Arg-102 is the PTS EIIA type-3 domain. The Tele-phosphohistidine intermediate role is filled by His-78. His-78 is modified (phosphohistidine; by HPr). Asp-81 serves as a coordination point for Mg(2+).

Homotrimer. Mg(2+) is required as a cofactor.

Its subcellular location is the cytoplasm. Functionally, the phosphoenolpyruvate-dependent sugar phosphotransferase system (sugar PTS), a major carbohydrate active transport system, catalyzes the phosphorylation of incoming sugar substrates concomitantly with their translocation across the cell membrane. The enzyme II LacEF PTS system is involved in lactose transport. This chain is PTS system lactose-specific EIIA component, found in Streptococcus mutans serotype c (strain ATCC 700610 / UA159).